Consider the following 151-residue polypeptide: Metalloproteinase inhibitor 3 (151 aa).

The 108-residue stretch at C1–C108 folds into the NTR domain. 3 cysteine pairs are disulfide-bonded: C1/C108, C115/C120, and C128/C149. An involved in metalloproteinase-binding region spans residues E53–S54. A mediates interaction with EFEMP1 region spans residues G71–R151.

This sequence belongs to the protease inhibitor I35 (TIMP) family. Interacts with EFEMP1.

It localises to the secreted. It is found in the extracellular space. The protein resides in the extracellular matrix. In terms of biological role, complexes with metalloproteinases (such as collagenases) and irreversibly inactivates them by binding to their catalytic zinc cofactor. May form part of a tissue-specific acute response to remodeling stimuli. The protein is Metalloproteinase inhibitor 3 (TIMP3) of Oryctolagus cuniculus (Rabbit).